The primary structure comprises 33 residues: Brevinin-2JD (33 aa).

An intrachain disulfide couples Cys27 to Cys33.

Expressed by the skin glands.

Its subcellular location is the secreted. Functionally, has antibacterial activity against E.coli ATCC 25992 (MIC=38 uM), E.coli CIB 84492 (MIC=38 uM), S.aureus ATCC 25923 (MIC=19 uM) and S.aureus CIB 85462 (MIC=19 uM). Has antifungal activity against C.albicans (MIC=19 uM). Has weak hemolytic activity against rabbit erythrocytes. The chain is Brevinin-2JD from Odorrana jingdongensis (Jingdong frog).